The sequence spans 430 residues: Serine hydroxymethyltransferase (430 aa).

(6S)-5,6,7,8-tetrahydrofolate is bound at residue 120–122; sequence GHI. Lys-226 carries the post-translational modification N6-(pyridoxal phosphate)lysine.

The protein belongs to the SHMT family. Homodimer. The cofactor is pyridoxal 5'-phosphate.

It localises to the cytoplasm. Its pathway is amino-acid biosynthesis; glycine biosynthesis; glycine from L-serine: step 1/1. In terms of biological role, catalyzes the reversible interconversion of serine and glycine with a modified folate serving as the one-carbon carrier. Also exhibits a pteridine-independent aldolase activity toward beta-hydroxyamino acids, producing glycine and aldehydes, via a retro-aldol mechanism. This is Serine hydroxymethyltransferase from Pyrobaculum calidifontis (strain DSM 21063 / JCM 11548 / VA1).